Here is a 391-residue protein sequence, read N- to C-terminus: Transposase for insertion sequence element IS905 (391 aa).

It belongs to the transposase mutator family.

In terms of biological role, required for the transposition of the insertion element. The polypeptide is Transposase for insertion sequence element IS905 (tra905) (Lactococcus lactis subsp. lactis (strain IL1403) (Streptococcus lactis)).